We begin with the raw amino-acid sequence, 472 residues long: Coronin-6 (472 aa).

WD repeat units follow at residues 23 to 64 (QAYE…VLPL), 72 to 111 (KNYPLVTGHTAPVLDIDWCPHNDNVIASASDDTTIMVWQI), 122 to 161 (EPIITLEGHSKRVGILSWHPTARNVLLSAGGDNVIIIWNV), 165 to 204 (EVLLSLDDMHPDVIHSVCWNSNGSLLATTCKDKTLRIIDP), 210 to 251 (VAEQ…LWDP), and 256 to 296 (EPVA…YFEI). A disordered region spans residues 407–433 (KRNILDVRPPSGPRRSQSASDAPLSQQ). Polar residues predominate over residues 420-433 (RRSQSASDAPLSQQ). Positions 430–464 (LSQQHTLETLLEEIKALRERVQAQEQRITALENML) form a coiled coil.

This chain is Coronin-6 (CORO6), found in Homo sapiens (Human).